The primary structure comprises 184 residues: Photosystem I assembly protein Ycf4 (184 aa).

A run of 2 helical transmembrane segments spans residues 22 to 42 (LCWAFILVLGAIGFSLVGFSS) and 64 to 84 (IVMCFYGIAGIFLGFYLWCTI).

Belongs to the Ycf4 family.

Its subcellular location is the plastid. The protein resides in the chloroplast thylakoid membrane. Its function is as follows. Seems to be required for the assembly of the photosystem I complex. This is Photosystem I assembly protein Ycf4 from Angiopteris evecta (Mule's foot fern).